A 228-amino-acid polypeptide reads, in one-letter code: L-ribulose-5-phosphate 4-epimerase UlaF (228 aa).

Substrate is bound by residues 26 to 27, 43 to 44, and 72 to 73; these read GN, SG, and SS. Asp-74, His-93, and His-95 together coordinate Zn(2+). Asp-118 serves as the catalytic Proton donor/acceptor. His-167 is a Zn(2+) binding site. Catalysis depends on Tyr-225, which acts as the Proton donor/acceptor.

This sequence belongs to the aldolase class II family. AraD/FucA subfamily. Requires Zn(2+) as cofactor.

The catalysed reaction is L-ribulose 5-phosphate = D-xylulose 5-phosphate. Its pathway is cofactor degradation; L-ascorbate degradation; D-xylulose 5-phosphate from L-ascorbate: step 4/4. Its function is as follows. Catalyzes the isomerization of L-ribulose 5-phosphate to D-xylulose 5-phosphate. Is involved in the anaerobic L-ascorbate utilization. The chain is L-ribulose-5-phosphate 4-epimerase UlaF from Salmonella paratyphi A (strain ATCC 9150 / SARB42).